A 401-amino-acid chain; its full sequence is Hemorrhagic metalloproteinase-disintegrin-like kaouthiagin (401 aa).

One can recognise a Peptidase M12B domain in the interval 14–208 (KYIEFYVIVD…DRPQCILNKP (195 aa)). 2 residues coordinate Ca(2+): Glu-17 and Asp-101. The N-linked (GlcNAc...) asparagine glycan is linked to Asn-112. Disulfide bonds link Cys-125–Cys-203, Cys-164–Cys-187, and Cys-166–Cys-171. A Zn(2+)-binding site is contributed by His-149. Glu-150 is a catalytic residue. Positions 153 and 159 each coordinate Zn(2+). Residues Cys-203, Asn-206, Ile-218, Asn-221, Phe-223, Glu-225, Glu-228, and Asp-231 each contribute to the Ca(2+) site. The Disintegrin domain maps to 216-285 (PAICGNYFVE…ECPTDSLQRN (70 aa)). 11 cysteine pairs are disulfide-bonded: Cys-219–Cys-248, Cys-230–Cys-243, Cys-232–Cys-238, Cys-257–Cys-277, Cys-264–Cys-296, Cys-289–Cys-301, Cys-308–Cys-358, Cys-323–Cys-366, Cys-336–Cys-346, Cys-353–Cys-389, and Cys-383–Cys-394. The D/ECD-tripeptide motif lies at 263–265 (DCD). The Ca(2+) site is built by Asp-265, Leu-266, Glu-268, and Asp-280.

This sequence belongs to the venom metalloproteinase (M12B) family. P-III subfamily. P-IIIa sub-subfamily. Monomer. Zn(2+) serves as cofactor. In terms of tissue distribution, expressed by the venom gland.

The protein localises to the secreted. Its function is as follows. Snake venom zinc protease that inhibits hemostasis by binding and cleaving the vWF in humans. Also has and inhibitory effect on the collagen-induced platelet aggregation. In Naja kaouthia (Monocled cobra), this protein is Hemorrhagic metalloproteinase-disintegrin-like kaouthiagin.